The following is a 188-amino-acid chain: SAYSvFN domain-containing protein 1 (188 aa).

Basic and acidic residues predominate over residues 1-10; it reads MEQRLAEFRE. Disordered regions lie at residues 1–43 and 60–80; these read MEQR…ATPK and AIAQ…PEST. Residues 1–100 are Cytoplasmic-facing; it reads MEQRLAEFRE…SFLTNITFLK (100 aa). Low complexity-rich tracts occupy residues 22–43 and 60–75; these read STSS…ATPK and AIAQ…AGQQ. Positions 86-100 are middle helical (MH); sequence SSCRQSFLTNITFLK. Positions 101-121 form an intramembrane region, helical; sequence VLLWLVLLGLFVELEFGLAYF. The Cytoplasmic segment spans residues 122–188; that stretch reads VLSMFYWMYV…RTSPSCSSYP (67 aa).

This sequence belongs to the SAYSD1 family. In terms of assembly, associates (via N-terminus) with ribosomes. As to expression, enriched in testis; predominantly expressed in round and elongating spermatids.

It is found in the endoplasmic reticulum membrane. It localises to the cytoplasmic vesicle membrane. Ufmylation 'reader' component of a translocation-associated quality control pathway, a mechanism that takes place when a ribosome has stalled during translation, and which is required to degrade clogged substrates. Specifically recognizes and binds ufmylated ribosomes when a ribosome has stalled, promoting the transport of stalled nascent chain via the TRAPP complex to lysosomes for degradation. The polypeptide is SAYSvFN domain-containing protein 1 (Mus musculus (Mouse)).